The following is an 873-amino-acid chain: Actin-related protein 8 (873 aa).

The interval 108–129 is disordered; that stretch reads DEQVKPTSSTSSTSTTEEVEIK. Low complexity predominate over residues 114–123; it reads TSSTSSTSTT. An ATP-binding site is contributed by 368–371; the sequence is DLGH. Residues 596–650 show a composition bias toward low complexity; the sequence is NNNNNNNNSSSSSNNNNNNNNSGSNSNINSYNNNNNNNNNNNNNNNNNNNNSFNN. Residues 596–701 are disordered; the sequence is NNNNNNNNSS…TSSPTKKLKI (106 aa). Over residues 651-668 the composition is skewed to polar residues; sequence VTIVTSTLNSNSTVPSTL. Residues 669–696 show a composition bias toward low complexity; the sequence is NSNSTVPSISNSNSTVPSTSTSTTSSPT. Residues 762–804 are a coiled coil; sequence FKQLEQQYQAQQLQFQQQLQQQQQQQQQLQQQLQNSTNSATTT.

It belongs to the actin family. ARP8 subfamily. In terms of assembly, component of the chromatin remodeling INO80 complex. Exists as monomers and dimers, but the dimer is most probably the biologically relevant form required for stable interactions with histones that exploits the twofold symmetry of the nucleosome core.

The protein localises to the nucleus. It localises to the cytoplasm. It is found in the cytoskeleton. In terms of biological role, plays an important role in the functional organization of mitotic chromosomes. Exhibits low basal ATPase activity, and unable to polymerize. Proposed core component of the chromatin remodeling INO80 complex which is involved in transcriptional regulation, DNA replication and probably DNA repair. Strongly prefer nucleosomes and H3-H4 tetramers over H2A-H2B dimers, suggesting it may act as a nucleosome recognition module within the complex. The polypeptide is Actin-related protein 8 (Dictyostelium discoideum (Social amoeba)).